Here is a 574-residue protein sequence, read N- to C-terminus: NEDD4-binding protein 2-like 2 (574 aa).

Disordered stretches follow at residues 82-110 (HKEM…LAPA), 127-161 (YKPP…QKFN), 182-204 (ENEN…QTLS), and 542-574 (TQKS…TDDY). Composition is skewed to basic and acidic residues over residues 129–141 (PPEK…RKNE) and 149–161 (DSKR…QKFN). A coiled-coil region spans residues 162–196 (SKKLEIDTELSQFYKEIEELENENEASQGSCKEPE). Residues 563-574 (GSHSQVSITDDY) show a composition bias toward polar residues.

This chain is NEDD4-binding protein 2-like 2 (N4bp2l2), found in Rattus norvegicus (Rat).